Consider the following 397-residue polypeptide: 3-ketoacyl-CoA thiolase, mitochondrial (397 aa).

The transit peptide at 1–16 directs the protein to the mitochondrion; not cleaved; the sequence is MALLRGVFIVAAKRTP. Lys25 is subject to N6-acetyllysine; alternate. Lys25 carries the N6-succinyllysine; alternate modification. Ser28 is subject to Phosphoserine. Lys45 bears the N6-succinyllysine mark. The active-site Acyl-thioester intermediate is Cys92. Thr119 is modified (phosphothreonine). Ser121 is modified (phosphoserine). Phosphotyrosine is present on Tyr127. At Thr136 the chain carries Phosphothreonine. Residues Lys137, Lys143, Lys158, Lys171, Lys191, and Lys209 each carry the N6-acetyllysine; alternate modification. 6 positions are modified to N6-succinyllysine; alternate: Lys137, Lys143, Lys158, Lys171, Lys191, and Lys209. 3 positions are modified to N6-succinyllysine: Lys211, Lys212, and Lys214. 2 residues coordinate CoA: Arg224 and Thr227. Position 234 is an N6-acetyllysine; alternate (Lys234). Position 234 is an N6-succinyllysine; alternate (Lys234). Lys240 bears the N6-succinyllysine mark. Lys241 carries the post-translational modification N6-acetyllysine. Ser251 contacts CoA. N6-acetyllysine is present on residues Lys269 and Lys270. Lys305 is subject to N6-acetyllysine; alternate. Residue Lys305 is modified to N6-succinyllysine; alternate. Ser310 is modified (phosphoserine). An N6-acetyllysine; alternate modification is found at Lys312. At Lys312 the chain carries N6-succinyllysine; alternate. N6-acetyllysine is present on Lys340. At Ser344 the chain carries Phosphoserine. Position 375 is an N6-acetyllysine (Lys375). Cys382 acts as the Proton donor/acceptor in catalysis.

This sequence belongs to the thiolase-like superfamily. Thiolase family. As to quaternary structure, homotetramer. Interacts with BNIP3.

Its subcellular location is the mitochondrion. The enzyme catalyses an acyl-CoA + acetyl-CoA = a 3-oxoacyl-CoA + CoA. It catalyses the reaction 2 acetyl-CoA = acetoacetyl-CoA + CoA. The catalysed reaction is acetyl-CoA + H2O = acetate + CoA + H(+). It carries out the reaction propanoyl-CoA + H2O = propanoate + CoA + H(+). The enzyme catalyses butanoyl-CoA + H2O = butanoate + CoA + H(+). It catalyses the reaction hexanoyl-CoA + H2O = hexanoate + CoA + H(+). The catalysed reaction is octanoyl-CoA + H2O = octanoate + CoA + H(+). It carries out the reaction decanoyl-CoA + H2O = decanoate + CoA + H(+). The enzyme catalyses dodecanoyl-CoA + H2O = dodecanoate + CoA + H(+). It catalyses the reaction tetradecanoyl-CoA + H2O = tetradecanoate + CoA + H(+). The catalysed reaction is hexadecanoyl-CoA + H2O = hexadecanoate + CoA + H(+). The protein operates within lipid metabolism; fatty acid beta-oxidation. In the production of energy from fats, this is one of the enzymes that catalyzes the last step of the mitochondrial beta-oxidation pathway, an aerobic process breaking down fatty acids into acetyl-CoA. Using free coenzyme A/CoA, catalyzes the thiolytic cleavage of medium- to long-chain unbranched 3-oxoacyl-CoAs into acetyl-CoA and a fatty acyl-CoA shortened by two carbon atoms. Also catalyzes the condensation of two acetyl-CoA molecules into acetoacetyl-CoA and could be involved in the production of ketone bodies. Also displays hydrolase activity on various fatty acyl-CoAs. Thereby, could be responsible for the production of acetate in a side reaction to beta-oxidation. Abolishes BNIP3-mediated apoptosis and mitochondrial damage. In Mus musculus (Mouse), this protein is 3-ketoacyl-CoA thiolase, mitochondrial (Acaa2).